The primary structure comprises 145 residues: MDINEILQYLPHRYPFLLVDRVLEIEEGKRILALKNVTMNEPFFPGHFPHHPVMPGVLIVEAMAQAAALLSFKSMGVKPDENSVVYFAGIDNVRFKRPVVPGDQLLFDVVITQSKRNIYKYKGVARVDGELATEAELTCALKTLS.

The active site involves His47.

The protein belongs to the thioester dehydratase family. FabZ subfamily.

The protein resides in the cytoplasm. The enzyme catalyses a (3R)-hydroxyacyl-[ACP] = a (2E)-enoyl-[ACP] + H2O. Involved in unsaturated fatty acids biosynthesis. Catalyzes the dehydration of short chain beta-hydroxyacyl-ACPs and long chain saturated and unsaturated beta-hydroxyacyl-ACPs. This is 3-hydroxyacyl-[acyl-carrier-protein] dehydratase FabZ from Aromatoleum aromaticum (strain DSM 19018 / LMG 30748 / EbN1) (Azoarcus sp. (strain EbN1)).